The chain runs to 226 residues: Calcium-binding protein 1 (226 aa).

A lipid anchor (N-myristoyl glycine) is attached at glycine 2. Cysteine 4 carries the S-palmitoyl cysteine lipid modification. 4 EF-hand domains span residues 81–116 (EEIEELREAFREFDKDKDGYINCRDLGNCMRTMGYM), 135–152 (GHVDFDDFVELMGPKLLA), 158–193 (IGVKELRDAFREFDTNGDGEISTSELREAMRKLLGH), and 195–226 (VGHRDIEEIIRDVDLNGDGRVDFEEFVRMMSR). The Ca(2+) site is built by aspartate 94, aspartate 96, aspartate 98, tyrosine 100, and aspartate 105. 4 residues coordinate Ca(2+): aspartate 171, asparagine 173, aspartate 175, and glutamate 177. Phosphoserine is present on serine 179. Residues glutamate 182, aspartate 208, asparagine 210, aspartate 212, arginine 214, and glutamate 219 each contribute to the Ca(2+) site.

Homodimer. Interacts (via C-terminus) with ITPR1, ITPR2 and ITPR3. This binding is calcium dependent and the interaction correlates with calcium concentration. An additional calcium-independent interaction with the N-terminus of ITPR1 results in a decreased InsP(3) binding to the receptor. Interacts with CACNA1A (via C-terminal CDB motif) in the pre- and postsynaptic membranes. Interacts with CACNA1C (via C-terminal C and IQ motifs). Interacts with CACNA1D. The binding to the C motif is calcium independent whereas the binding to IQ requires the presence of calcium and is mutually exclusive with calmodulin binding. Interacts with TRPC5 (via C-terminus). Interacts (via EF-hands 1 and 2) at microtubules with MAP1LC3B. Interacts with MYO1C. Interacts (via EF-hands 1 and 2) with NSMF (via the central NLS-containing motif region), the interaction occurs in a calcium dependent manner after synaptic NMDA receptor stimulation and prevents nuclear import of NSMF. Interacts with SPACA9. In terms of processing, phosphorylated. The phosphorylation regulates the activity.

Its subcellular location is the cytoplasm. The protein resides in the cytoskeleton. The protein localises to the perinuclear region. It is found in the cell membrane. It localises to the golgi apparatus. Its subcellular location is the postsynaptic density. In terms of biological role, modulates calcium-dependent activity of inositol 1,4,5-triphosphate receptors (ITPRs). Inhibits agonist-induced intracellular calcium signaling. Enhances inactivation and does not support calcium-dependent facilitation of voltage-dependent P/Q-type calcium channels. Causes calcium-dependent facilitation and inhibits inactivation of L-type calcium channels by binding to the same sites as calmodulin in the C-terminal domain of CACNA1C, but has an opposite effect on channel function. Suppresses the calcium-dependent inactivation of CACNA1D. Inhibits TRPC5 channels. Prevents NMDA receptor-induced cellular degeneration. Required for the normal transfer of light signals through the retina. The protein is Calcium-binding protein 1 (CABP1) of Bos taurus (Bovine).